A 472-amino-acid chain; its full sequence is Excisase A (472 aa).

Positions 244-429 (EILSGITKFE…FSLDMRKLAI (186 aa)) constitute a Tyr recombinase domain. Catalysis depends on residues Arg-287, Lys-317, Arg-384, and His-407. Tyr-416 serves as the catalytic O-(3'-phospho-DNA)-tyrosine intermediate.

It belongs to the XisA/XisC recombinase family.

In terms of biological role, essential for DNA excision. Site specific recombinase necessary for the excision of the 11 kb nifD element during heterocyst differentiation. This Nostoc sp. (strain PCC 7120 / SAG 25.82 / UTEX 2576) protein is Excisase A (xisA).